The following is a 453-amino-acid chain: Serine--tRNA ligase (453 aa).

252-254 (TAE) is a binding site for L-serine. Residues 283–285 (RKE) and Val-299 contribute to the ATP site. Glu-306 contributes to the L-serine binding site. Residue 370–373 (EMVS) coordinates ATP. Residue Thr-405 participates in L-serine binding.

It belongs to the class-II aminoacyl-tRNA synthetase family. Type-1 seryl-tRNA synthetase subfamily. As to quaternary structure, homodimer. The tRNA molecule binds across the dimer.

The protein resides in the cytoplasm. It catalyses the reaction tRNA(Ser) + L-serine + ATP = L-seryl-tRNA(Ser) + AMP + diphosphate + H(+). The catalysed reaction is tRNA(Sec) + L-serine + ATP = L-seryl-tRNA(Sec) + AMP + diphosphate + H(+). Its pathway is aminoacyl-tRNA biosynthesis; selenocysteinyl-tRNA(Sec) biosynthesis; L-seryl-tRNA(Sec) from L-serine and tRNA(Sec): step 1/1. Functionally, catalyzes the attachment of serine to tRNA(Ser). Is also able to aminoacylate tRNA(Sec) with serine, to form the misacylated tRNA L-seryl-tRNA(Sec), which will be further converted into selenocysteinyl-tRNA(Sec). The sequence is that of Serine--tRNA ligase from Sulfurisphaera tokodaii (strain DSM 16993 / JCM 10545 / NBRC 100140 / 7) (Sulfolobus tokodaii).